Here is a 590-residue protein sequence, read N- to C-terminus: Putative DEAD-box ATP-dependent RNA helicase 51 (590 aa).

The disordered stretch occupies residues 1–81 (MHPIKLCARS…KQGEGKKGSG (81 aa)). Over residues 40 to 51 (AACNSEGENNAT) the composition is skewed to polar residues. Residues 59–78 (NKKMKEEKSKRKKKQGEGKK) show a composition bias toward basic and acidic residues. A Q motif motif is present at residues 86–114 (KLFSDLPISDLTANAIRDMNYTHLTEIQA). Positions 117–293 (IPPLMLGSDV…KLTFGSKEER (177 aa)) constitute a Helicase ATP-binding domain. 130 to 137 (AKTGSGKT) contacts ATP. Residues 240 to 243 (DEAD) carry the DEAD box motif. The 153-residue stretch at 329-481 (VLYAFLKKAL…ELVPKLQPYL (153 aa)) folds into the Helicase C-terminal domain. The segment at 549 to 590 (LESSASKHRKKRNVNTGRRHGIGPSNPYGRKGSDDRRQFARF) is disordered. Residues 554 to 569 (SKHRKKRNVNTGRRHG) show a composition bias toward basic residues. The segment covering 579–590 (KGSDDRRQFARF) has biased composition (basic and acidic residues).

The protein belongs to the DEAD box helicase family. DDX18/HAS1 subfamily.

It catalyses the reaction ATP + H2O = ADP + phosphate + H(+). The sequence is that of Putative DEAD-box ATP-dependent RNA helicase 51 from Oryza sativa subsp. japonica (Rice).